The following is a 44-amino-acid chain: Protein PsbN (44 aa).

Residues 7-29 (FFTTFLGCLLLSITGYSIYVGFG) form a helical membrane-spanning segment.

Belongs to the PsbN family.

Its subcellular location is the plastid. It is found in the chloroplast thylakoid membrane. In terms of biological role, may play a role in photosystem I and II biogenesis. The sequence is that of Protein PsbN from Pleurastrum terricola (Filamentous green alga).